The sequence spans 602 residues: Proline--tRNA ligase (602 aa).

This sequence belongs to the class-II aminoacyl-tRNA synthetase family. ProS type 1 subfamily. Homodimer.

The protein localises to the cytoplasm. It catalyses the reaction tRNA(Pro) + L-proline + ATP = L-prolyl-tRNA(Pro) + AMP + diphosphate. Functionally, catalyzes the attachment of proline to tRNA(Pro) in a two-step reaction: proline is first activated by ATP to form Pro-AMP and then transferred to the acceptor end of tRNA(Pro). As ProRS can inadvertently accommodate and process non-cognate amino acids such as alanine and cysteine, to avoid such errors it has two additional distinct editing activities against alanine. One activity is designated as 'pretransfer' editing and involves the tRNA(Pro)-independent hydrolysis of activated Ala-AMP. The other activity is designated 'posttransfer' editing and involves deacylation of mischarged Ala-tRNA(Pro). The misacylated Cys-tRNA(Pro) is not edited by ProRS. The polypeptide is Proline--tRNA ligase (Thermosynechococcus vestitus (strain NIES-2133 / IAM M-273 / BP-1)).